A 1274-amino-acid chain; its full sequence is DENN domain-containing protein 3 (1274 aa).

Residues 65 to 108 are disordered; that stretch reads GQVPGASCALGKGRRRSFRKKREKPRMEPWKSHPGDSKGPDSED. Residues 75 to 245 enclose the uDENN domain; sequence GKGRRRSFRK…LIPSPPPGPL (171 aa). Residues 76-88 show a composition bias toward basic residues; sequence KGRRRSFRKKREK. Residues 89–105 are compositionally biased toward basic and acidic residues; it reads PRMEPWKSHPGDSKGPD. Residues 268-400 form the cDENN domain; sequence IVDLDLHLPL…PLLLAQTFIQ (133 aa). The dDENN domain occupies 402-506; it reads VQSLQLHPDL…KARLNGRMDA (105 aa). The linker stretch occupies residues 520-970; sequence RIDRMLISPR…KHKINPSAGE (451 aa). 2 positions are modified to phosphoserine; by ULK1: Ser554 and Ser572. Tyr940 is modified (phosphotyrosine). 7 WD repeats span residues 975–1013, 1019–1055, 1059–1099, 1103–1140, 1146–1181, 1186–1228, and 1234–1273; these read AIEV…VFDA, HQHC…IINV, SCNK…AWNV, RVIS…TPQG, LKHP…MWSL, QPPQ…IYVM, and TVEK…IWKV.

As to quaternary structure, forms oligomers. Interacts with 6 of the 7 known isoforms of 14-3-3 proteins.

The protein resides in the cytoplasm. In terms of biological role, guanine nucleotide exchange factor (GEF) activating Rab12. Promotes the exchange of GDP to GTP, converting inactive GDP-bound Rab12 into its active GTP-bound form. Regulates autophagy in response to starvation through Rab12 activation. Starvation leads to ULK1/2-dependent phosphorylation of Ser-554 and Ser-572, which in turn allows recruitment of 14-3-3 adapter proteins and leads to up-regulation of GEF activity towards Rab12. Also plays a role in protein transport from recycling endosomes to lysosomes, regulating, for instance, the degradation of the transferrin receptor and of the amino acid transporter PAT4. Starvation also induces phosphorylation at Tyr-940, which leads to up-regulated GEF activity and initiates autophagy. The protein is DENN domain-containing protein 3 (Dennd3) of Mus musculus (Mouse).